We begin with the raw amino-acid sequence, 110 residues long: Phosphoribosyl-ATP pyrophosphatase (110 aa).

This sequence belongs to the PRA-PH family.

Its subcellular location is the cytoplasm. It carries out the reaction 1-(5-phospho-beta-D-ribosyl)-ATP + H2O = 1-(5-phospho-beta-D-ribosyl)-5'-AMP + diphosphate + H(+). Its pathway is amino-acid biosynthesis; L-histidine biosynthesis; L-histidine from 5-phospho-alpha-D-ribose 1-diphosphate: step 2/9. In Azotobacter chroococcum mcd 1, this protein is Phosphoribosyl-ATP pyrophosphatase (hisE).